Here is an 863-residue protein sequence, read N- to C-terminus: MAYPFHDIETKWQQYWEEHQTFRTPDEVPDDQEEFYVLDMFPYPSGSGLHVGHPEGYTATDIVARYKRKQGFNVLHPMGWDAFGLPAEQYALKTNTHPRETTEKNIAQFKRQLKRLGFSYDWQREINTTDPDYYKWTQWIFLQLYEKGLAYQSEEPVWWCEELGTVLANEEVIDGKSERGGYPCERVPMRQWVLKITEYADRLLEGLEDLDWPESTKEMQRNWIGRSEGANVYFDLVGADDALEVYTTRPDTLFGATYMVLAPEHELLDEITTDEHREDVDEYCRQALRKSERKRQQQGDKTGVFTGGYAVNPVNGEEIPIWVADYVLVSYGTGAIMAVPAHDERDHAFANKYDLPIREVVEGGDIDEEAYTGDGPHVHSANEAVSLNGLRNEEAKEAITEWLDEEEKGERTVNYQLQDWLFSRQRYWGEPFPIVFTEDGEDKPVPEEELPVTLPDLDVFEPSGTPEGPLATIEDWRETTDPETGEPAQRETNTMPQWAGSCWYYLRFIDPDNDEQLVDPEKEEYWMPVDLYVGGSEHAVLHLLYARFWHKVLYDAGVVSTKEPFQTLVHQGMILGETEYTAYRDDAGEFVSAEQVDDDADLTPVPVDDGDVKKDGDVFVLADRPAVRVDARSHKMSKSRGNVINPDDVVDEYGADTLRLYEMFMGPLEQDKPWSTDDMEGVHRFLNRIWRLVVDADSGGLAVSDEEPDREQLRTLHRTIKTVTEDIEARDFNTAIAAMMEFVNAANKWDALPRQVATPFVLLLSPFAPHLAEELWARLGHDQSLAYADWPAYDDELIRREVVEMPVQVDGTVRATIEVAADAEEADVLATAKEAENVARHLDDEDLQREIYVPGQIVNFVTG.

The 'HIGH' region motif lies at 42-53 (PYPSGSGLHVGH). Positions 635 to 639 (KMSKS) match the 'KMSKS' region motif. Residue lysine 638 coordinates ATP.

This sequence belongs to the class-I aminoacyl-tRNA synthetase family.

Its subcellular location is the cytoplasm. It carries out the reaction tRNA(Leu) + L-leucine + ATP = L-leucyl-tRNA(Leu) + AMP + diphosphate. The protein is Leucine--tRNA ligase of Salinibacter ruber (strain DSM 13855 / M31).